The chain runs to 185 residues: Threonylcarbamoyl-AMP synthase (185 aa).

The 182-residue stretch at 4 to 185 (SFRVQQAARE…LATGEVVRPG (182 aa)) folds into the YrdC-like domain.

This sequence belongs to the SUA5 family. TsaC subfamily.

It localises to the cytoplasm. The enzyme catalyses L-threonine + hydrogencarbonate + ATP = L-threonylcarbamoyladenylate + diphosphate + H2O. Required for the formation of a threonylcarbamoyl group on adenosine at position 37 (t(6)A37) in tRNAs that read codons beginning with adenine. Catalyzes the conversion of L-threonine, HCO(3)(-)/CO(2) and ATP to give threonylcarbamoyl-AMP (TC-AMP) as the acyladenylate intermediate, with the release of diphosphate. The sequence is that of Threonylcarbamoyl-AMP synthase from Pseudomonas putida (strain ATCC 47054 / DSM 6125 / CFBP 8728 / NCIMB 11950 / KT2440).